We begin with the raw amino-acid sequence, 673 residues long: UvrABC system protein B (673 aa).

In terms of domain architecture, Helicase ATP-binding spans 26–183; sequence EGLEDGLAHQ…RRLAELQYTR (158 aa). 39–46 contacts ATP; that stretch reads GVTGSGKT. The Beta-hairpin motif lies at 92–115; it reads YYDYYQPEAYVPSSDTFIEKDASV. The Helicase C-terminal domain maps to 431-597; sequence QVDDLLSEIR…GLNKKVVDIL (167 aa). The interval 608-627 is disordered; the sequence is AKGRGKSRPIVEPDNVPMDM. In terms of domain architecture, UVR spans 633–668; that stretch reads QQKIHELEGLMMQHAQNLEFEEAAQIRDQLHQLREL.

The protein belongs to the UvrB family. As to quaternary structure, forms a heterotetramer with UvrA during the search for lesions. Interacts with UvrC in an incision complex.

Its subcellular location is the cytoplasm. The UvrABC repair system catalyzes the recognition and processing of DNA lesions. A damage recognition complex composed of 2 UvrA and 2 UvrB subunits scans DNA for abnormalities. Upon binding of the UvrA(2)B(2) complex to a putative damaged site, the DNA wraps around one UvrB monomer. DNA wrap is dependent on ATP binding by UvrB and probably causes local melting of the DNA helix, facilitating insertion of UvrB beta-hairpin between the DNA strands. Then UvrB probes one DNA strand for the presence of a lesion. If a lesion is found the UvrA subunits dissociate and the UvrB-DNA preincision complex is formed. This complex is subsequently bound by UvrC and the second UvrB is released. If no lesion is found, the DNA wraps around the other UvrB subunit that will check the other stand for damage. This is UvrABC system protein B from Escherichia fergusonii (strain ATCC 35469 / DSM 13698 / CCUG 18766 / IAM 14443 / JCM 21226 / LMG 7866 / NBRC 102419 / NCTC 12128 / CDC 0568-73).